The primary structure comprises 271 residues: Cobalt import ATP-binding protein CbiO (271 aa).

An ABC transporter domain is found at 2 to 236; it reads LATSDLWFRY…TEAMEHAGLT (235 aa). 34–41 is a binding site for ATP; it reads GANGCGKS.

This sequence belongs to the ABC transporter superfamily. Cobalt importer (TC 3.A.1.18.1) family. As to quaternary structure, forms an energy-coupling factor (ECF) transporter complex composed of an ATP-binding protein (A component, CbiO), a transmembrane protein (T component, CbiQ) and 2 possible substrate-capture proteins (S components, CbiM and CbiN) of unknown stoichimetry.

The protein resides in the cell inner membrane. It participates in cofactor biosynthesis; adenosylcobalamin biosynthesis. Its function is as follows. Part of the energy-coupling factor (ECF) transporter complex CbiMNOQ involved in cobalt import. Presumably responsible for energy coupling to the transport system. The polypeptide is Cobalt import ATP-binding protein CbiO (Salmonella typhi).